The primary structure comprises 450 residues: Exodeoxyribonuclease 7 large subunit (450 aa).

The protein belongs to the XseA family. As to quaternary structure, heterooligomer composed of large and small subunits.

The protein resides in the cytoplasm. The catalysed reaction is Exonucleolytic cleavage in either 5'- to 3'- or 3'- to 5'-direction to yield nucleoside 5'-phosphates.. In terms of biological role, bidirectionally degrades single-stranded DNA into large acid-insoluble oligonucleotides, which are then degraded further into small acid-soluble oligonucleotides. This chain is Exodeoxyribonuclease 7 large subunit, found in Listeria welshimeri serovar 6b (strain ATCC 35897 / DSM 20650 / CCUG 15529 / CIP 8149 / NCTC 11857 / SLCC 5334 / V8).